The sequence spans 336 residues: Holliday junction branch migration complex subunit RuvB (336 aa).

Residues 4 to 184 form a large ATPase domain (RuvB-L) region; that stretch reads ADRLVSADSS…FGIVQRLEFY (181 aa). Residues isoleucine 23, arginine 24, glycine 65, lysine 68, threonine 69, threonine 70, 131–133, arginine 174, tyrosine 184, and arginine 221 contribute to the ATP site; that span reads EDY. Threonine 69 is a binding site for Mg(2+). The small ATPAse domain (RuvB-S) stretch occupies residues 185–255; that stretch reads QIPDLQHIVS…IAAQALDMLN (71 aa). Residues 258-336 are head domain (RuvB-H); it reads AEGFDYMDRK…HFGITPPEMP (79 aa). The DNA site is built by arginine 294, arginine 313, and arginine 318.

Belongs to the RuvB family. As to quaternary structure, homohexamer. Forms an RuvA(8)-RuvB(12)-Holliday junction (HJ) complex. HJ DNA is sandwiched between 2 RuvA tetramers; dsDNA enters through RuvA and exits via RuvB. An RuvB hexamer assembles on each DNA strand where it exits the tetramer. Each RuvB hexamer is contacted by two RuvA subunits (via domain III) on 2 adjacent RuvB subunits; this complex drives branch migration. In the full resolvosome a probable DNA-RuvA(4)-RuvB(12)-RuvC(2) complex forms which resolves the HJ.

Its subcellular location is the cytoplasm. The catalysed reaction is ATP + H2O = ADP + phosphate + H(+). The RuvA-RuvB-RuvC complex processes Holliday junction (HJ) DNA during genetic recombination and DNA repair, while the RuvA-RuvB complex plays an important role in the rescue of blocked DNA replication forks via replication fork reversal (RFR). RuvA specifically binds to HJ cruciform DNA, conferring on it an open structure. The RuvB hexamer acts as an ATP-dependent pump, pulling dsDNA into and through the RuvAB complex. RuvB forms 2 homohexamers on either side of HJ DNA bound by 1 or 2 RuvA tetramers; 4 subunits per hexamer contact DNA at a time. Coordinated motions by a converter formed by DNA-disengaged RuvB subunits stimulates ATP hydrolysis and nucleotide exchange. Immobilization of the converter enables RuvB to convert the ATP-contained energy into a lever motion, pulling 2 nucleotides of DNA out of the RuvA tetramer per ATP hydrolyzed, thus driving DNA branch migration. The RuvB motors rotate together with the DNA substrate, which together with the progressing nucleotide cycle form the mechanistic basis for DNA recombination by continuous HJ branch migration. Branch migration allows RuvC to scan DNA until it finds its consensus sequence, where it cleaves and resolves cruciform DNA. This is Holliday junction branch migration complex subunit RuvB from Klebsiella pneumoniae (strain 342).